The following is a 269-amino-acid chain: Indole-3-glycerol phosphate synthase (269 aa).

The protein belongs to the TrpC family.

It catalyses the reaction 1-(2-carboxyphenylamino)-1-deoxy-D-ribulose 5-phosphate + H(+) = (1S,2R)-1-C-(indol-3-yl)glycerol 3-phosphate + CO2 + H2O. It participates in amino-acid biosynthesis; L-tryptophan biosynthesis; L-tryptophan from chorismate: step 4/5. This chain is Indole-3-glycerol phosphate synthase, found in Roseiflexus castenholzii (strain DSM 13941 / HLO8).